The primary structure comprises 206 residues: Large ribosomal subunit protein uL3 (206 aa).

The segment at 127 to 151 is disordered; the sequence is SGGPSSHGSKFHRHLGGTGQATTPA.

Belongs to the universal ribosomal protein uL3 family. As to quaternary structure, part of the 50S ribosomal subunit. Forms a cluster with proteins L14 and L19.

Its function is as follows. One of the primary rRNA binding proteins, it binds directly near the 3'-end of the 23S rRNA, where it nucleates assembly of the 50S subunit. The polypeptide is Large ribosomal subunit protein uL3 (Borrelia garinii subsp. bavariensis (strain ATCC BAA-2496 / DSM 23469 / PBi) (Borreliella bavariensis)).